We begin with the raw amino-acid sequence, 309 residues long: Elongation factor Ts (309 aa).

Residues threonine 82–valine 85 form an involved in Mg(2+) ion dislocation from EF-Tu region.

The protein belongs to the EF-Ts family.

It is found in the cytoplasm. In terms of biological role, associates with the EF-Tu.GDP complex and induces the exchange of GDP to GTP. It remains bound to the aminoacyl-tRNA.EF-Tu.GTP complex up to the GTP hydrolysis stage on the ribosome. This Rickettsia typhi (strain ATCC VR-144 / Wilmington) protein is Elongation factor Ts.